The primary structure comprises 297 residues: Transcriptional regulator protein Pur-beta (297 aa).

Disordered stretches follow at residues 1-26 (MADG…EQET) and 275-297 (QERH…VDDD). At alanine 2 the chain carries N-acetylalanine. A DNA-binding region spans residues 23–246 (EQETQELASK…LRVSEVKPSY (224 aa)). Over residues 275–288 (QERHRDKMYERREE) the composition is skewed to basic and acidic residues.

Belongs to the PUR DNA-binding protein family.

Its subcellular location is the nucleus. Transcriptional regulator which can act as an activator or a repressor. This is Transcriptional regulator protein Pur-beta (purb) from Danio rerio (Zebrafish).